The chain runs to 245 residues: 1-(5-phosphoribosyl)-5-[(5-phosphoribosylamino)methylideneamino] imidazole-4-carboxamide isomerase (245 aa).

Catalysis depends on Asp8, which acts as the Proton acceptor. Asp130 acts as the Proton donor in catalysis.

The protein belongs to the HisA/HisF family.

The protein resides in the cytoplasm. The enzyme catalyses 1-(5-phospho-beta-D-ribosyl)-5-[(5-phospho-beta-D-ribosylamino)methylideneamino]imidazole-4-carboxamide = 5-[(5-phospho-1-deoxy-D-ribulos-1-ylimino)methylamino]-1-(5-phospho-beta-D-ribosyl)imidazole-4-carboxamide. The protein operates within amino-acid biosynthesis; L-histidine biosynthesis; L-histidine from 5-phospho-alpha-D-ribose 1-diphosphate: step 4/9. The chain is 1-(5-phosphoribosyl)-5-[(5-phosphoribosylamino)methylideneamino] imidazole-4-carboxamide isomerase from Marinobacter nauticus (strain ATCC 700491 / DSM 11845 / VT8) (Marinobacter aquaeolei).